The primary structure comprises 117 residues: UPF0102 protein Ssed_4252 (117 aa).

This sequence belongs to the UPF0102 family.

This chain is UPF0102 protein Ssed_4252, found in Shewanella sediminis (strain HAW-EB3).